We begin with the raw amino-acid sequence, 470 residues long: Metalloreductase STEAP4 (470 aa).

NADP(+) contacts are provided by residues 27–30 (TGDF), 49–50 (SR), Tyr67, 81–85 (MHREH), Asn106, and Ala139. Residues Trp140 and Asp148 each contribute to the FAD site. Position 171 (Arg171) interacts with NADP(+). 2 helical membrane passes run 202 to 224 (FPFYLSSVLCVFFFVYCAIREVI) and 236 to 256 (YRLAISIPNRVFPITALILLA). Tyr217 is a Fe(3+) binding site. The Ferric oxidoreductase domain occupies 247 to 395 (FPITALILLA…LGYLTLVLCT (149 aa)). Residues Gln269 and Arg290 each contribute to the FAD site. 2 helical membrane-spanning segments follow: residues 293-313 (LGLVALGFAFLHVIYTLVIPI) and 342-362 (AWINDSYLALGILGFFLFLLL). A heme b-binding site is contributed by His304. Residue Tyr307 coordinates Fe(3+). Ser366 and Gln383 together coordinate FAD. The next 2 membrane-spanning stretches (helical) occupy residues 381-401 (FVQSKLGYLTLVLCTAHTLVY) and 419-439 (AYILALVIPCAVLVLKCILIM). Residue His397 coordinates heme b.

Belongs to the STEAP family. As to quaternary structure, homotrimer. Interacts with PTK2/FAK1; the interaction may regulate PTK2 phosphorylation. Requires FAD as cofactor. Heme b is required as a cofactor. Expressed in white and brown adipose tissues cells, as well as in muscle and liver cells. Detected in joints and spleens of arthritic mice.

Its subcellular location is the cell membrane. It localises to the golgi apparatus membrane. The protein resides in the early endosome membrane. It carries out the reaction 2 Fe(2+) + NADP(+) + H(+) = 2 Fe(3+) + NADPH. The catalysed reaction is 2 Cu(+) + NADP(+) + H(+) = 2 Cu(2+) + NADPH. Its function is as follows. Integral membrane protein that functions as a NADPH-dependent ferric-chelate reductase, using NADPH from one side of the membrane to reduce a Fe(3+) chelate that is bound on the other side of the membrane. Mediates sequential transmembrane electron transfer from NADPH to FAD and onto heme, and finally to the Fe(3+) chelate. Can also reduce Cu(2+) to Cu(1+). Plays a role in systemic metabolic homeostasis, integrating inflammatory and metabolic responses. Associated with obesity and insulin-resistance. Involved in inflammatory arthritis, through the regulation of inflammatory cytokines. Inhibits anchorage-independent cell proliferation. In Mus musculus (Mouse), this protein is Metalloreductase STEAP4 (Steap4).